A 189-amino-acid chain; its full sequence is MTEYKLVVVGAGGVGKSALTIQLIQNHFVDEYDPTIEDSYRKQVVIDGETCLLDILDTAGQEEYSAMRDQYMRTGEGFLCVFAINNSKSFADINAYREQIKRVKDSDDVPMVLVGNKCDLPSRTVDTKQAQELARSYGIPFIETSAKTRQGVEDAFYTLVREIHQYRMKKLDSSEDNNQGCIRIPCKLM.

10 to 17 (GAGGVGKS) is a binding site for GTP. Positions 32 to 40 (YDPTIEDSY) match the Effector region motif. GTP-binding positions include 57 to 61 (DTAGQ) and 116 to 119 (NKCD). A hypervariable region region spans residues 166–185 (YRMKKLDSSEDNNQGCIRIP). A lipid anchor (S-palmitoyl cysteine) is attached at C181. C186 carries S-farnesyl cysteine lipidation. Positions 187-189 (KLM) are cleaved as a propeptide — removed in mature form.

It belongs to the small GTPase superfamily. Ras family. Post-translationally, palmitoylated by the ZDHHC9-GOLGA7 complex. Depalmitoylated by abhd17a, abhd17b and abhd17c. A continuous cycle of de- and re-palmitoylation regulates rapid exchange between plasma membrane and Golgi.

It is found in the cell membrane. The protein resides in the golgi apparatus membrane. The enzyme catalyses GTP + H2O = GDP + phosphate + H(+). Alternates between an inactive form bound to GDP and an active form bound to GTP. Activated by a guanine nucleotide-exchange factor (GEF) and inactivated by a GTPase-activating protein (GAP). Ras proteins bind GDP/GTP and possess intrinsic GTPase activity. The chain is GTPase NRas (nras) from Xenopus laevis (African clawed frog).